Consider the following 180-residue polypeptide: Large ribosomal subunit protein uL6 (180 aa).

Belongs to the universal ribosomal protein uL6 family. Part of the 50S ribosomal subunit.

Its function is as follows. This protein binds to the 23S rRNA, and is important in its secondary structure. It is located near the subunit interface in the base of the L7/L12 stalk, and near the tRNA binding site of the peptidyltransferase center. The protein is Large ribosomal subunit protein uL6 of Bdellovibrio bacteriovorus (strain ATCC 15356 / DSM 50701 / NCIMB 9529 / HD100).